A 766-amino-acid chain; its full sequence is TRP-like ion channel protein flc1 (766 aa).

The first 24 residues, 1–24, serve as a signal peptide directing secretion; the sequence is MRIPLFILTFLFTFFSLATTPVSA. The Lumenal segment spans residues 25-170; that stretch reads DSGVLYTDAV…ANGKTAHQKG (146 aa). N56, N73, N89, and N109 each carry an N-linked (GlcNAc...) asparagine glycan. The helical transmembrane segment at 171 to 191 threads the bilayer; the sequence is VIWASAIFTLVAFLVAIWHTA. Over 192–205 the chain is Cytoplasmic; it reads SGTSTSPIQYRWFD. The chain crosses the membrane as a helical span at residues 206-226; the sequence is ILFIFQVAAASGLLHLNYPLV. Residues 227-351 lie on the Lumenal side of the membrane; that stretch reads YTNFVQNFHW…RIPEANAYDT (125 aa). Residue N325 is glycosylated (N-linked (GlcNAc...) asparagine). The helical transmembrane segment at 352–372 threads the bilayer; it reads IWFVFLALIGIFIAFHVLLFG. Topologically, residues 373-407 are cytoplasmic; sequence MVLLFDRMGRNRSHLGWAARLRRMWWPFCVGNSLR. A helical membrane pass occupies residues 408–428; the sequence is LCLIGFFPIWIFAFWQFHIGD. The Lumenal segment spans residues 429–432; it reads SGLS. The chain crosses the membrane as a helical span at residues 433–453; that stretch reads IFWAVFGILLTLVPLATAFLL. Residues 454 to 493 are Cytoplasmic-facing; that stretch reads SLLRARRISSTSPEINSLYTSFRYFHSIGVLYRQYRQKFH. Residues 494–514 traverse the membrane as a helical segment; the sequence is YFWFTPFVLAMIARAGFIAFG. At 515–517 the chain is on the lumenal side; sequence PAS. Residues 518–538 traverse the membrane as a helical segment; it reads AWAQVIGNLVVEFIVLVALLA. Topologically, residues 539 to 548 are cytoplasmic; it reads CRPHKDKKGD. A helical membrane pass occupies residues 549–569; the sequence is WLGAFLSICRLIAIGLLIAFI. The Lumenal portion of the chain corresponds to 570-580; the sequence is PDMNVKPIPRA. The helical transmembrane segment at 581–601 threads the bilayer; the sequence is VIAFVIIVFYGVPVVFLFVGF. Residues 602–766 lie on the Cytoplasmic side of the membrane; that stretch reads LWNIGYGYLW…TDEKQWSRRY (165 aa). The disordered stretch occupies residues 704–766; sequence ASSADGALSP…TDEKQWSRRY (63 aa). The segment covering 757 to 766 has biased composition (basic and acidic residues); the sequence is TDEKQWSRRY.

The protein belongs to the transient receptor potential (TRP) ion channel family.

Its subcellular location is the endoplasmic reticulum membrane. Its function is as follows. Endoplasmic reticulum membrane flavin carrier protein that plays a crucial role in Ca(2+) signaling/homeostasis via the modulation of the calcineurin-Crz1 stress response pathway which is important for both stress responses and virulence. The protein is TRP-like ion channel protein flc1 of Cryptococcus neoformans var. grubii serotype A (strain H99 / ATCC 208821 / CBS 10515 / FGSC 9487) (Filobasidiella neoformans var. grubii).